The sequence spans 1581 residues: Laminin subunit gamma-3 (1581 aa).

The N-terminal stretch at 1 to 28 (MAVSRVLSLLATVASMALVIQETHFAAG) is a signal peptide. The region spanning 40–279 (RAQRCLPEFE…AVSDFSVGGR (240 aa)) is the Laminin N-terminal domain. A glycan (N-linked (GlcNAc...) asparagine) is linked at Asn128. 16 cysteine pairs are disulfide-bonded: Cys280/Cys289, Cys282/Cys299, Cys301/Cys310, Cys313/Cys333, Cys336/Cys345, Cys338/Cys361, Cys364/Cys373, Cys376/Cys389, Cys392/Cys404, Cys394/Cys410, Cys412/Cys421, Cys424/Cys436, Cys439/Cys450, Cys441/Cys457, Cys459/Cys468, and Cys471/Cys486. Laminin EGF-like domains lie at 280-335 (CKCN…ECLP), 336-391 (CNCS…PCQP), 392-438 (CDCH…GCRP), and 439-488 (CACN…GCSS). A glycan (N-linked (GlcNAc...) asparagine) is linked at Asn304. The N-linked (GlcNAc...) asparagine glycan is linked to Asn337. Residues 489–498 (CFCYGHSKVC) enclose the Laminin EGF-like 5; first part domain. The Laminin IV type A domain maps to 508–684 (HIRSDFRHGA…LAPPASWVET (177 aa)). The N-linked (GlcNAc...) asparagine glycan is linked to Asn640. The 34-residue stretch at 685–718 (CLCPQGYTGQFCEFCALGYKREIPHGGPYANCIP) folds into the Laminin EGF-like 5; second part domain. 24 cysteine pairs are disulfide-bonded: Cys719–Cys727, Cys721–Cys734, Cys736–Cys745, Cys748–Cys764, Cys767–Cys775, Cys769–Cys786, Cys789–Cys798, Cys801–Cys819, Cys822–Cys836, Cys824–Cys843, Cys846–Cys855, Cys858–Cys875, Cys878–Cys891, Cys880–Cys898, Cys900–Cys909, Cys912–Cys925, Cys928–Cys940, Cys930–Cys947, Cys949–Cys958, Cys961–Cys973, Cys976–Cys988, Cys978–Cys994, Cys996–Cys1005, and Cys1008–Cys1021. Laminin EGF-like domains follow at residues 719–766 (CTCN…DCQP), 767–821 (CPCP…PCRR), 822–877 (CQCS…KCAP), 878–927 (CSCD…GCQS), 928–975 (CKCH…GCRD), and 976–1024 (CRCS…CQEC). The N-linked (GlcNAc...) asparagine glycan is linked to Asn849. Asn991 carries N-linked (GlcNAc...) asparagine glycosylation. Residues 1025 to 1581 (PTCYALVKEE…LSSLPENCAS (557 aa)) form a domain II and I region. 2 coiled-coil regions span residues 1029–1046 (ALVK…MLME) and 1112–1153 (VHCA…LASL). Asn1162 and Asn1196 each carry an N-linked (GlcNAc...) asparagine glycan. Residues 1208 to 1231 (RVASEAQQELEDRYQEVQAAQTAL) adopt a coiled-coil conformation. A glycan (N-linked (GlcNAc...) asparagine) is linked at Asn1320. The tract at residues 1382–1413 (KRKTKQAERMLGNAASLSSSTKKKSKEAELMS) is disordered. Coiled-coil stretches lie at residues 1438–1468 (ASQT…AKQV) and 1510–1575 (AQTL…LSSL). A glycan (N-linked (GlcNAc...) asparagine) is linked at Asn1514.

Laminin is a complex glycoprotein, consisting of three different polypeptide chains (alpha, beta, gamma), which are bound to each other by disulfide bonds into a cross-shaped molecule comprising one long and three short arms with globules at each end. Gamma-3 is a subunit of laminin-12 (laminin-213), laminin-14 (laminin-423) and laminin-15 (laminin-523). As to expression, strongly expressed in capillaries and arterioles of kidney as well as in interstitial Leydig cells of testis.

It is found in the secreted. Its subcellular location is the extracellular space. It localises to the extracellular matrix. The protein localises to the basement membrane. Functionally, binding to cells via a high affinity receptor, laminin is thought to mediate the attachment, migration and organization of cells into tissues during embryonic development by interacting with other extracellular matrix components. The chain is Laminin subunit gamma-3 (Lamc3) from Mus musculus (Mouse).